The chain runs to 995 residues: UPF0182 protein MUL_2505 (995 aa).

7 helical membrane passes run Val-18 to Asp-38, Phe-63 to Leu-83, Leu-113 to Tyr-133, Phe-175 to Ile-195, Ile-210 to Asn-230, Lys-259 to Leu-279, and Ile-287 to Val-307. Positions Ala-900–Leu-947 are disordered. The span at Gly-928–Pro-941 shows a compositional bias: pro residues.

The protein belongs to the UPF0182 family.

The protein localises to the cell membrane. This chain is UPF0182 protein MUL_2505, found in Mycobacterium ulcerans (strain Agy99).